The chain runs to 141 residues: 3-hydroxyacyl-[acyl-carrier-protein] dehydratase FabZ (141 aa).

The active site involves His49.

The protein belongs to the thioester dehydratase family. FabZ subfamily.

The protein localises to the cytoplasm. It carries out the reaction a (3R)-hydroxyacyl-[ACP] = a (2E)-enoyl-[ACP] + H2O. Involved in unsaturated fatty acids biosynthesis. Catalyzes the dehydration of short chain beta-hydroxyacyl-ACPs and long chain saturated and unsaturated beta-hydroxyacyl-ACPs. This chain is 3-hydroxyacyl-[acyl-carrier-protein] dehydratase FabZ, found in Fusobacterium nucleatum subsp. nucleatum (strain ATCC 25586 / DSM 15643 / BCRC 10681 / CIP 101130 / JCM 8532 / KCTC 2640 / LMG 13131 / VPI 4355).